The chain runs to 327 residues: Eukaryotic translation initiation factor 3 subunit I (327 aa).

WD repeat units follow at residues 8–49 (GHDR…GTYD), 51–91 (HNGV…NSVS), 144–183 (SLQT…DIVN), 188–227 (AHKF…CLKT), 229–268 (KAER…GHFE), and 285–324 (GHFG…LKFD).

The protein belongs to the eIF-3 subunit I family. In terms of assembly, component of the eukaryotic translation initiation factor 3 (eIF-3) complex.

It is found in the cytoplasm. Functionally, component of the eukaryotic translation initiation factor 3 (eIF-3) complex, which is involved in protein synthesis of a specialized repertoire of mRNAs and, together with other initiation factors, stimulates binding of mRNA and methionyl-tRNAi to the 40S ribosome. The eIF-3 complex specifically targets and initiates translation of a subset of mRNAs involved in cell proliferation. In Brugia malayi (Filarial nematode worm), this protein is Eukaryotic translation initiation factor 3 subunit I.